A 263-amino-acid chain; its full sequence is MAFLWLVSCFALVGATFGCGVPTIQPVLTGLSRIVNGEDAIPGSWPWQVSLQDKTGFHFCGGSLISEDWVVTAAHCGVKTSDVVVAGEFDQGSDEENIQVLKIAQVFKNPKFNMFTVRNDITLLKLATPAQFSETVSAVCLPNVDDDFPPGTVCATTGWGKTKYNALKTPEKLQQAALPIVSEADCKKSWGSKITDVMTCAGASGVSSCMGDSGGPLVCQKDGVWTLAGIVSWGSGVCSTSTPAVYSRVTALMPWVQQILEAN.

The N-terminal stretch at 1-18 (MAFLWLVSCFALVGATFG) is a signal peptide. Disulfide bonds link Cys-19/Cys-140, Cys-60/Cys-76, Cys-154/Cys-219, Cys-186/Cys-200, and Cys-209/Cys-238. A Peptidase S1 domain is found at 34–261 (IVNGEDAIPG…LMPWVQQILE (228 aa)). Catalysis depends on His-75, which acts as the Charge relay system. Ser-93 carries the post-translational modification Phosphoserine. Asp-120 (charge relay system) is an active-site residue. Ser-213 serves as the catalytic Charge relay system.

Belongs to the peptidase S1 family.

The protein localises to the secreted. It localises to the extracellular space. It catalyses the reaction Preferential cleavage: Tyr-|-Xaa, Trp-|-Xaa, Phe-|-Xaa, Leu-|-Xaa.. The protein is Chymotrypsinogen B (Ctrb1) of Rattus norvegicus (Rat).